Reading from the N-terminus, the 177-residue chain is MSELVTVARPYAKAAFDFAVEHQAVAHWQAMLTFCAEVSRNERIAELLSGAVVPEKLAETFIAVCGEELDAAGQNLIRVMAENGRLTVLPDVLEQFTLWRAAQEATVEVDVISASTLKEEQLAKISAAMEQRLSRKVKLNCKIDKSVVAGVVIRAGDMVIDGSVRGRLERLADVLQS.

It belongs to the ATPase delta chain family. F-type ATPases have 2 components, F(1) - the catalytic core - and F(0) - the membrane proton channel. F(1) has five subunits: alpha(3), beta(3), gamma(1), delta(1), epsilon(1). F(0) has three main subunits: a(1), b(2) and c(10-14). The alpha and beta chains form an alternating ring which encloses part of the gamma chain. F(1) is attached to F(0) by a central stalk formed by the gamma and epsilon chains, while a peripheral stalk is formed by the delta and b chains.

It is found in the cell inner membrane. In terms of biological role, f(1)F(0) ATP synthase produces ATP from ADP in the presence of a proton or sodium gradient. F-type ATPases consist of two structural domains, F(1) containing the extramembraneous catalytic core and F(0) containing the membrane proton channel, linked together by a central stalk and a peripheral stalk. During catalysis, ATP synthesis in the catalytic domain of F(1) is coupled via a rotary mechanism of the central stalk subunits to proton translocation. Its function is as follows. This protein is part of the stalk that links CF(0) to CF(1). It either transmits conformational changes from CF(0) to CF(1) or is implicated in proton conduction. The protein is ATP synthase subunit delta of Sodalis glossinidius (strain morsitans).